The primary structure comprises 220 residues: WAP four-disulfide core domain protein 1 (220 aa).

The N-terminal stretch at 1 to 31 (MPLTGVGPGSCRRQIIRALCLLLLLLHAGSA) is a signal peptide. Positions 46-70 (KSRAEEAGAPGGPRQPRADRCPPPP) are disordered. The region spanning 59-108 (RQPRADRCPPPPRTLPPGACQAARCQADSECPRHRRCCYNGCAYACLEAV) is the WAP domain. Intrachain disulfides connect Cys66/Cys96, Cys78/Cys100, Cys83/Cys95, and Cys89/Cys104. The segment at 199-220 (EYPEGDSKNVAEPGRGQQKHFQ) is disordered.

Its subcellular location is the secreted. Its function is as follows. Has growth inhibitory activity. The chain is WAP four-disulfide core domain protein 1 (WFDC1) from Homo sapiens (Human).